A 209-amino-acid polypeptide reads, in one-letter code: Large ribosomal subunit protein uL3 (209 aa).

Positions 130 to 162 are disordered; sequence RGPMTHGSKFKRAPGSMGASSDPSRTFKNKRMP.

It belongs to the universal ribosomal protein uL3 family. As to quaternary structure, part of the 50S ribosomal subunit. Forms a cluster with proteins L14 and L19.

Its function is as follows. One of the primary rRNA binding proteins, it binds directly near the 3'-end of the 23S rRNA, where it nucleates assembly of the 50S subunit. The sequence is that of Large ribosomal subunit protein uL3 from Clostridium botulinum (strain Alaska E43 / Type E3).